The primary structure comprises 101 residues: Small ribosomal subunit protein uS14 (101 aa).

This sequence belongs to the universal ribosomal protein uS14 family. Part of the 30S ribosomal subunit. Contacts proteins S3 and S10.

In terms of biological role, binds 16S rRNA, required for the assembly of 30S particles and may also be responsible for determining the conformation of the 16S rRNA at the A site. The chain is Small ribosomal subunit protein uS14 from Francisella tularensis subsp. tularensis (strain FSC 198).